A 360-amino-acid chain; its full sequence is Mediator of RNA polymerase II transcription subunit 6 (360 aa).

Disordered regions lie at residues proline 186–leucine 238 and alanine 316–alanine 360. Composition is skewed to low complexity over residues serine 190–serine 205 and alanine 316–alanine 325.

It belongs to the Mediator complex subunit 6 family. In terms of assembly, component of the Mediator complex.

It localises to the nucleus. Component of the Mediator complex, a coactivator involved in the regulated transcription of nearly all RNA polymerase II-dependent genes. Mediator functions as a bridge to convey information from gene-specific regulatory proteins to the basal RNA polymerase II transcription machinery. Mediator is recruited to promoters by direct interactions with regulatory proteins and serves as a scaffold for the assembly of a functional preinitiation complex with RNA polymerase II and the general transcription factors. The sequence is that of Mediator of RNA polymerase II transcription subunit 6 (med-6) from Neurospora crassa (strain ATCC 24698 / 74-OR23-1A / CBS 708.71 / DSM 1257 / FGSC 987).